The sequence spans 965 residues: Inner tegument protein (965 aa).

An interaction with large tegument protein region spans residues 489 to 965 (WDLNKFYVLS…KLEQSITGSF (477 aa)).

It belongs to the herpesviridae inner tegument protein family. As to quaternary structure, interacts (via C-terminus) with the large tegument protein/LTP (via N-terminus).

Its subcellular location is the virion tegument. The protein resides in the host cytoplasm. It is found in the host nucleus. It localises to the host Golgi apparatus. The protein localises to the host trans-Golgi network. Plays an essential role in cytoplasmic secondary envelopment during viral egress. Interacts with the capsid via the large tegument protein/LTP and participates in its transport to the host trans-Golgi network (TGN) where secondary envelopment occurs. Modulates tegumentation and capsid accumulation at the viral assembly complex. The sequence is that of Inner tegument protein (63) from Equine herpesvirus 2 (strain 86/87) (EHV-2).